The sequence spans 170 residues: Putative 5'(3')-deoxyribonucleotidase (170 aa).

The active-site Nucleophile is aspartate 28. Mg(2+) contacts are provided by aspartate 28, aspartate 30, and aspartate 134. Catalysis depends on aspartate 30, which acts as the Proton donor.

Belongs to the 5'(3')-deoxyribonucleotidase family. The cofactor is Mg(2+).

Dephosphorylates the 5' and 2'(3')-phosphates of deoxyribonucleotides. This chain is Putative 5'(3')-deoxyribonucleotidase, found in Vibrio parahaemolyticus (KVP40).